Consider the following 313-residue polypeptide: Protein-methionine-sulfoxide reductase catalytic subunit MsrP (313 aa).

Positions 1 to 46 form a signal peptide, tat-type signal; sequence MPSYRAPKIAAAEITPERFFLDRRTFIAAAAGSLALSVPKPSRAAA. Residues N70, 73–74, C127, T162, N212, R217, and 228–230 contribute to the Mo-molybdopterin site; these read YE and GIK.

Belongs to the MsrP family. As to quaternary structure, heterodimer of a catalytic subunit (MsrP) and a heme-binding subunit (MsrQ). Mo-molybdopterin is required as a cofactor. Post-translationally, predicted to be exported by the Tat system. The position of the signal peptide cleavage has not been experimentally proven.

Its subcellular location is the periplasm. The enzyme catalyses L-methionyl-[protein] + a quinone + H2O = L-methionyl-(S)-S-oxide-[protein] + a quinol. The catalysed reaction is L-methionyl-[protein] + a quinone + H2O = L-methionyl-(R)-S-oxide-[protein] + a quinol. Its function is as follows. Part of the MsrPQ system that repairs oxidized periplasmic proteins containing methionine sulfoxide residues (Met-O), using respiratory chain electrons. Thus protects these proteins from oxidative-stress damage caused by reactive species of oxygen and chlorine generated by the host defense mechanisms. MsrPQ is essential for the maintenance of envelope integrity under bleach stress, rescuing a wide series of structurally unrelated periplasmic proteins from methionine oxidation. The catalytic subunit MsrP is non-stereospecific, being able to reduce both (R-) and (S-) diastereoisomers of methionine sulfoxide. The chain is Protein-methionine-sulfoxide reductase catalytic subunit MsrP from Rhizobium meliloti (strain 1021) (Ensifer meliloti).